The sequence spans 120 residues: NAD(P)H-quinone oxidoreductase subunit 3, chloroplastic (120 aa).

The next 3 membrane-spanning stretches (helical) occupy residues 7 to 27 (YETF…AFLI), 64 to 84 (MFAL…PWAM), and 88 to 108 (ILGI…IVGS).

The protein belongs to the complex I subunit 3 family. As to quaternary structure, NDH is composed of at least 16 different subunits, 5 of which are encoded in the nucleus.

It is found in the plastid. It localises to the chloroplast thylakoid membrane. The enzyme catalyses a plastoquinone + NADH + (n+1) H(+)(in) = a plastoquinol + NAD(+) + n H(+)(out). It carries out the reaction a plastoquinone + NADPH + (n+1) H(+)(in) = a plastoquinol + NADP(+) + n H(+)(out). In terms of biological role, NDH shuttles electrons from NAD(P)H:plastoquinone, via FMN and iron-sulfur (Fe-S) centers, to quinones in the photosynthetic chain and possibly in a chloroplast respiratory chain. The immediate electron acceptor for the enzyme in this species is believed to be plastoquinone. Couples the redox reaction to proton translocation, and thus conserves the redox energy in a proton gradient. The protein is NAD(P)H-quinone oxidoreductase subunit 3, chloroplastic of Cycas taitungensis (Prince sago).